The sequence spans 104 residues: MAKMMQREITKTTVNVAKMVMVDGEVQVEQLPSETFVGNLTMEQAQWRMKRKYKGEPVQVVSVEPNTEVYELPVEKFLEVATVRVEKDEDQEEQTEAPEEQVAE.

Residues 1–19 (MAKMMQREITKTTVNVAKM) mediate DNA binding. The tract at residues 85–104 (VEKDEDQEEQTEAPEEQVAE) is disordered. Positions 88 to 104 (DEDQEEQTEAPEEQVAE) are enriched in acidic residues.

It belongs to the phi29likevirus histone-like protein p6 family. As to quaternary structure, homodimer. Homomultimer. Binds to double-stranded DNA giving rise to multimeric nucleoprotein complexes. Binding specificity for the viral DNA is based on supercoiling, the viral genome having a negative superhelicity lower than that of plasmid DNA. Interacts with the DNA replication protein p17; this interaction optimizes the binding of protein p6 at the viral DNA ends, thus favoring the initiation of replication. Interacts with the late genes activator p4 (via C-terminus).

Histone-like nucleoprotein that binds to the viral dsDNA and responsible for wrapping and compacting the viral DNA about 4-fold. Forms a nucleoprotein complex in which the DNA adopts a right-handed toroidal conformation winding around a protein core. Binds ito most, if not all, the viral genome, although with different affinity, the highest one corresponding to the genome ends. The formation of the nucleoprotein complex at the genome ends, activates the initiation of viral DNA replication. The binding of p6 would recruit the complex formed by the TP and the DNA polymerase to the origin. Protein p6 also represses early transcription from promoter C2, and, together with protein p4, represses transcription from promoters A2b and A2c and activates late transcription from promoter A3. Protein p6 is therefore involved in the early to late transcription switch. The formation of the nucleoprotein complex at the right end of the phage genome where the early promoter C2 is located affects local topology, which may contribute to the promoter repression. This Bacillus subtilis (Bacteriophage phi-29) protein is Histone-like protein p6 (6).